A 172-amino-acid polypeptide reads, in one-letter code: Gastrula zinc finger protein XlCGF51.1A (172 aa).

6 C2H2-type zinc fingers span residues 6–28, 34–56, 62–84, 90–112, 122–144, and 150–172; these read FSCS…NKIH, LICS…QRSH, FSCT…QRTH, FSCT…MLKH, LDCS…RKSH, and LQCS…QRVH.

Belongs to the krueppel C2H2-type zinc-finger protein family.

It localises to the nucleus. Functionally, may be involved in transcriptional regulation. The chain is Gastrula zinc finger protein XlCGF51.1A from Xenopus laevis (African clawed frog).